The following is a 496-amino-acid chain: 2-methylcitrate dehydratase-like protein oryR (496 aa).

Belongs to the PrpD family.

Its pathway is secondary metabolite biosynthesis. 2-methylcitrate dehydratase-like protein; part of the gene cluster that mediates the biosynthesis of oryzines, natural products with an unusual maleidride backbone. The two subunits of the fungal fatty acid synthase oryfasA and oryfasB probably form octenoic acid. This fatty acid is most likely activated by the acyl-CoA ligase oryP to give octenyl-CoA before the citrate synthase-like protein oryE catalyzes condensation with oxaloacetate to form tricarboxylic acid. The next steps of the pathways are conjectural, but a favorite possible route has been proposed, beginning with decarboxylation and concomitant dehydration by the decarboxylase oryM, followed by tautomerization, which may lead to the production of a diene intermediate. Reduction of this diene intermediate could give the known metabolite piliformic acid. On the pathway to oryzine B and oryzine A, however, hydroxylation of the diene by the alpha-ketoglutarate-dependent dioxygenase oryG and lactonisation by the lactonohydrolases oryH or oryL could give oryzine B directly. Finally, enoyl reduction by the dehydrogenase oryD would then convert oryzine B into oryzine A. This Aspergillus oryzae (strain ATCC 42149 / RIB 40) (Yellow koji mold) protein is 2-methylcitrate dehydratase-like protein oryR.